The following is a 209-amino-acid chain: CASP-like protein 2A2 (209 aa).

At M1 to P37 the chain is on the cytoplasmic side. A helical membrane pass occupies residues I38–L58. The Extracellular portion of the chain corresponds to R59 to Y79. Residues L80–V100 traverse the membrane as a helical segment. Topologically, residues P101–S109 are cytoplasmic. A helical membrane pass occupies residues W110–A130. The Extracellular portion of the chain corresponds to A131 to R161. Residues I162 to S182 form a helical membrane-spanning segment. Residues Y183–R209 lie on the Cytoplasmic side of the membrane.

This sequence belongs to the Casparian strip membrane proteins (CASP) family. Homodimer and heterodimers.

It localises to the cell membrane. This Zea mays (Maize) protein is CASP-like protein 2A2.